We begin with the raw amino-acid sequence, 117 residues long: Putative membrane protein insertion efficiency factor (117 aa).

This sequence belongs to the UPF0161 family.

It is found in the cell inner membrane. In terms of biological role, could be involved in insertion of integral membrane proteins into the membrane. In Bartonella henselae (strain ATCC 49882 / DSM 28221 / CCUG 30454 / Houston 1) (Rochalimaea henselae), this protein is Putative membrane protein insertion efficiency factor.